Here is a 393-residue protein sequence, read N- to C-terminus: Digeranylgeranylglycerophospholipid reductase (393 aa).

Residues Ala13, Asp32, Cys43, Ala44, Gly46, Arg95, Val119, Asp274, and Gly286 each coordinate FAD. Positions 327 and 363 each coordinate a 2,3-bis-O-(geranylgeranyl)-sn-glycerol 1-phospholipid.

This sequence belongs to the geranylgeranyl reductase family. DGGGPL reductase subfamily. The cofactor is FAD.

The enzyme catalyses a 2,3-bis-O-phytanyl-sn-glycerol 1-phospholipid + 8 A = a 2,3-bis-O-(geranylgeranyl)-sn-glycerol 1-phospholipid + 8 AH2. The catalysed reaction is 2,3-bis-O-(phytanyl)-sn-glycerol 1-phosphate + 8 A = 2,3-bis-O-(geranylgeranyl)-sn-glycerol 1-phosphate + 8 AH2. It carries out the reaction CDP-2,3-bis-O-(geranylgeranyl)-sn-glycerol + 8 AH2 = CDP-2,3-bis-O-(phytanyl)-sn-glycerol + 8 A. It catalyses the reaction archaetidylserine + 8 AH2 = 2,3-bis-O-phytanyl-sn-glycero-3-phospho-L-serine + 8 A. The protein operates within membrane lipid metabolism; glycerophospholipid metabolism. In terms of biological role, is involved in the reduction of 2,3-digeranylgeranylglycerophospholipids (unsaturated archaeols) into 2,3-diphytanylglycerophospholipids (saturated archaeols) in the biosynthesis of archaeal membrane lipids. Catalyzes the formation of archaetidic acid (2,3-di-O-phytanyl-sn-glyceryl phosphate) from 2,3-di-O-geranylgeranylglyceryl phosphate (DGGGP) via the hydrogenation of each double bond of the isoprenoid chains. Is also probably able to reduce double bonds of geranyl groups in CDP-2,3-bis-O-(geranylgeranyl)-sn-glycerol and archaetidylserine, thus acting at various stages in the biosynthesis of archaeal membrane lipids. The sequence is that of Digeranylgeranylglycerophospholipid reductase from Pyrococcus furiosus (strain ATCC 43587 / DSM 3638 / JCM 8422 / Vc1).